Reading from the N-terminus, the 346-residue chain is MNPHATPVLVLSLALGTTITISSNHWVLAWTGLEINTLAIIPLISKSHHPRAVEAATKYFLTQAAASALVLFSSMTNAWATGQWDITQLNHPTSCLLLTAAIAIKLGLVPFHFWFPEVLQGSPLMTALLLSTLMKFPPLTLLLMTSKSLNPALLTAMALASAALGGWMGLNQTQTRKILAFSSISHLGWIAIILVYSPKLALLTFYLYTIMTSAVFMALNKIKALNLSMVLTSWTKTPVLNATLMLVLLSLAGLPPLTGFMPKWLIIQELTKQEMTPAAMAIAMLSLLSLFFYLRLAYHSTITLPPNSSNHMKQWYTSKPPSTPTAILASLSILLLPLSPMIHAIV.

11 helical membrane passes run 1–21 (MNPH…TITI), 25–45 (HWVL…PLIS), 60–80 (FLTQ…NAWA), 95–115 (CLLL…HFWF), 124–144 (LMTA…LLLM), 149–169 (LNPA…GWMG), 178–195 (ILAF…IILV), 200–219 (LALL…FMAL), 242–262 (ATLM…GFMP), 274–294 (EMTP…FFYL), and 326–346 (AILA…HAIV).

This sequence belongs to the complex I subunit 2 family.

The protein resides in the mitochondrion inner membrane. The enzyme catalyses a ubiquinone + NADH + 5 H(+)(in) = a ubiquinol + NAD(+) + 4 H(+)(out). Functionally, core subunit of the mitochondrial membrane respiratory chain NADH dehydrogenase (Complex I) that is believed to belong to the minimal assembly required for catalysis. Complex I functions in the transfer of electrons from NADH to the respiratory chain. The immediate electron acceptor for the enzyme is believed to be ubiquinone. In Anas acuta (Northern pintail), this protein is NADH-ubiquinone oxidoreductase chain 2 (MT-ND2).